Consider the following 115-residue polypeptide: Large ribosomal subunit protein bL19 (115 aa).

This sequence belongs to the bacterial ribosomal protein bL19 family.

Functionally, this protein is located at the 30S-50S ribosomal subunit interface and may play a role in the structure and function of the aminoacyl-tRNA binding site. This is Large ribosomal subunit protein bL19 from Salmonella choleraesuis (strain SC-B67).